Here is a 479-residue protein sequence, read N- to C-terminus: Catalase A (479 aa).

The active site involves His-63. Tyr-346 lines the heme pocket.

This sequence belongs to the catalase family. Heme is required as a cofactor.

The protein localises to the peroxisome matrix. It carries out the reaction 2 H2O2 = O2 + 2 H2O. Its function is as follows. Catalyzes the degradation of hydrogen peroxide (H(2)O(2)) generated by peroxisomal oxidases to water and oxygen, thereby protecting cells from the toxic effects of hydrogen peroxide. This is Catalase A (catA) from Botryotinia fuckeliana (Noble rot fungus).